An 816-amino-acid chain; its full sequence is Sucrose synthase 2 (816 aa).

The segment at 280-757 is GT-B glycosyltransferase; sequence MVLNVVILSP…GLQRIEEKYT (478 aa).

This sequence belongs to the glycosyltransferase 1 family. Plant sucrose synthase subfamily. In terms of assembly, forms homotetramers and heterotetramers with SS1, all three possible heterotetramers are formed. Abundant in developing endosperm, low in aleurone, and undetected in coleoptiles and roots. Also detected in crude extracts of anthers and in immature embryos.

The enzyme catalyses an NDP-alpha-D-glucose + D-fructose = a ribonucleoside 5'-diphosphate + sucrose + H(+). In terms of biological role, sucrose-cleaving enzyme that provides UDP-glucose and fructose for various metabolic pathways. This is Sucrose synthase 2 (SS2) from Hordeum vulgare (Barley).